The primary structure comprises 1047 residues: FACT complex subunit SPT16 (1047 aa).

Residue Ala-2 is modified to N-acetylalanine. Lys-139 bears the N6-acetyllysine mark. The residue at position 188 (Ser-188) is a Phosphoserine. Lys-196 and Lys-223 each carry N6-acetyllysine. Residues 432–507 (LKNEDEEEEE…GEQQIQKARK (76 aa)) are a coiled coil. The residue at position 455 (Ser-455) is a Phosphoserine. The tract at residues 492 to 518 (RLTEQKGEQQIQKARKSNVSYKNPSLM) is disordered. A Glycyl lysine isopeptide (Lys-Gly) (interchain with G-Cter in SUMO2) cross-link involves residue Lys-497. The segment covering 499-514 (EQQIQKARKSNVSYKN) has biased composition (polar residues). Ser-508 is subject to Phosphoserine. Lys-513 bears the N6-acetyllysine; alternate mark. Lys-513 participates in a covalent cross-link: Glycyl lysine isopeptide (Lys-Gly) (interchain with G-Cter in SUMO2); alternate. Lys-647 participates in a covalent cross-link: Glycyl lysine isopeptide (Lys-Gly) (interchain with G-Cter in SUMO2). A phosphoserine mark is found at Ser-650 and Ser-658. An N6-acetyllysine mark is found at Lys-732 and Lys-786. Thr-903 is modified (phosphothreonine). Lys-904 carries the N6-acetyllysine modification. The segment at 918–1047 (EQGGWSFLEP…SSAPPKKKRK (130 aa)) is disordered. Positions 927 to 973 (PEGEGSDAEEGDSESEIEDETFNPSEDDYEEEEEDSDEDYSSEAEES) are enriched in acidic residues. Residues Ser-979, Ser-982, Ser-986, and Ser-1015 each carry the phosphoserine modification. A compositionally biased stretch (basic and acidic residues) spans 985-1005 (ESGKDWDELEEEARKADRESR). Residues 1024-1039 (VHSSGRGSNRGSRHSS) are compositionally biased toward low complexity.

Belongs to the peptidase M24 family. SPT16 subfamily. In terms of assembly, interacts with MYOG (via C-terminal region). Component of the FACT complex, a stable heterodimer of SSRP1 and SUPT16H. Also a component of a CK2-SPT16-SSRP1 complex which forms following UV irradiation, composed of SSRP1, SUPT16H, CSNK2A1, CSNK2A2 and CSNK2B. Interacts with NEK9. Binds to histone H2A-H2B. Identified in a centromere complex containing histones H2A, H2B and H4, and at least CENPA, CENPB, CENPC, CENPT, CENPN, HJURP, SUPT16H, SSRP1 and RSF1. Interacts with GTF2E2. As to quaternary structure, (Microbial infection) Interacts with Herpes simplex virus 1 (HHV-1) protein ICP22; this interaction relocalizes the FACT complex to viral genomes in infected cells. In terms of processing, ADP-ribosylated. ADP-ribosylation by PARP1 is induced by genotoxic stress and correlates with dissociation of FACT from chromatin. Ubiquitous.

It localises to the nucleus. The protein resides in the chromosome. Its function is as follows. Component of the FACT complex, a general chromatin factor that acts to reorganize nucleosomes. The FACT complex is involved in multiple processes that require DNA as a template such as mRNA elongation, DNA replication and DNA repair. During transcription elongation the FACT complex acts as a histone chaperone that both destabilizes and restores nucleosomal structure. It facilitates the passage of RNA polymerase II and transcription by promoting the dissociation of one histone H2A-H2B dimer from the nucleosome, then subsequently promotes the reestablishment of the nucleosome following the passage of RNA polymerase II. The FACT complex is probably also involved in phosphorylation of 'Ser-392' of p53/TP53 via its association with CK2 (casein kinase II). The polypeptide is FACT complex subunit SPT16 (SUPT16H) (Homo sapiens (Human)).